Consider the following 654-residue polypeptide: NADPH-dependent diflavin oxidoreductase 1 (654 aa).

Residues 1-10 show a composition bias toward low complexity; that stretch reads MSGSQSSGSP. The disordered stretch occupies residues 1–22; sequence MSGSQSSGSPGSPGPPGPPGRS. A Flavodoxin-like domain is found at 23–167; the sequence is ALVVYGSETG…TFIPWLAGFR (145 aa). FMN is bound by residues 29–34, 76–79, and 114–123; these read SETGNA, STTG, and LGDSSYPKFN. The region spanning 235 to 485 is the FAD-binding FR-type domain; sequence HDSLTATLVQ…QLQRGGLNSS (251 aa). Residues Arg389, 419-422, and 458-461 each bind FAD; these read RQFS and GVCT. Residues Thr500, 568 to 569, and 574 to 578 contribute to the NADP(+) site; these read SR and KVYVQ. Trp654 provides a ligand contact to FAD.

It belongs to the NADPH-dependent diflavin oxidoreductase NDOR1 family. In the N-terminal section; belongs to the flavodoxin family. This sequence in the C-terminal section; belongs to the flavoprotein pyridine nucleotide cytochrome reductase family. Interacts with dre2; as part of the cytosolic iron-sulfur (Fe-S) protein assembly (CIA) machinery. Requires FAD as cofactor. The cofactor is FMN.

It localises to the cytoplasm. Its subcellular location is the mitochondrion. The enzyme catalyses 2 oxidized [2Fe-2S]-[protein] + NADPH = 2 reduced [2Fe-2S]-[protein] + NADP(+) + H(+). In terms of biological role, NADPH-dependent reductase which is a central component of the cytosolic iron-sulfur (Fe-S) protein assembly (CIA) machinery. Transfers electrons from NADPH via its FAD and FMN prosthetic groups to the [2Fe-2S] cluster of dre2, another key component of the CIA machinery. In turn, this reduced cluster provides electrons for assembly of cytosolic iron-sulfur cluster proteins. Positively controls H(2)O(2)-induced cell death. The sequence is that of NADPH-dependent diflavin oxidoreductase 1 from Emericella nidulans (strain FGSC A4 / ATCC 38163 / CBS 112.46 / NRRL 194 / M139) (Aspergillus nidulans).